The primary structure comprises 284 residues: Transmembrane protein 163b (284 aa).

The interval 1 to 44 (MTDSSSASDPTAGPVDPGPAPSAPDPALEDPASTPANGHHPNQA) is disordered. Topologically, residues 1-83 (MTDSSSASDP…HEAQSYRKKA (83 aa)) are cytoplasmic. The helical transmembrane segment at 84 to 104 (LWVSWVSIVVTMILAIAAFTV) threads the bilayer. Residues 105-111 (SIMRHSA) lie on the Extracellular side of the membrane. A helical membrane pass occupies residues 112-132 (SAFGFAFDATLDVLSSIIVLW). The Cytoplasmic segment spans residues 133 to 145 (RYSNAAAVHSAHR). Residues 146–166 (EYIACVILGVVFILSAITILV) traverse the membrane as a helical segment. Residues 167–182 (KAIHDLATKLEPEVDD) lie on the Extracellular side of the membrane. A helical membrane pass occupies residues 183-203 (FLYSVSVISGVVCTVLCVCKF). The Cytoplasmic portion of the chain corresponds to 204 to 212 (MLGKVLTSR). Residues 213-233 (ALITDGFNSLVGGVMGFSILI) form a helical membrane-spanning segment. The Extracellular portion of the chain corresponds to 234 to 243 (SAEVFKHEPS). A helical membrane pass occupies residues 244–264 (VWFLDGTIGILIGLIILAYGV). The Cytoplasmic portion of the chain corresponds to 265 to 284 (KLLKDMVPRIRQTRHYERFE).

Belongs to the TMEM163 family.

The protein resides in the cytoplasmic vesicle. Its subcellular location is the secretory vesicle. It is found in the synaptic vesicle membrane. The protein localises to the early endosome membrane. It localises to the late endosome membrane. The protein resides in the lysosome membrane. Its subcellular location is the cell membrane. It carries out the reaction Zn(2+)(in) = Zn(2+)(out). Zinc ion transporter that mediates zinc efflux and plays a crucial role in intracellular zinc homeostasis. Binds the divalent cations Zn(2+), Ni(2+), and to a minor extent Cu(2+). Is a functional modulator of P2X purinoceptors, including P2RX1, P2RX3, P2RX4 and P2RX7. Plays a role in central nervous system development and is required for myelination, and survival and proliferation of oligodendrocytes. The protein is Transmembrane protein 163b of Danio rerio (Zebrafish).